Consider the following 184-residue polypeptide: MTAENRGFCQLICHINVRIGWTIFGIVFGISAILTYAIKFHNWSATATTAIATLFACETLYLYWALKKNTIVNWKSSTFQLMIWPNVFIGLLGLLGCLVCYIIAGITHQGAGSIQGWSLFKCSIYFSKFAAMYGENLWFTGSWSLVITKWTWQNAFFARKYLNKIGTASEDGDIDDDDVEVIKS.

The helical transmembrane segment at 19 to 39 (IGWTIFGIVFGISAILTYAIK) threads the bilayer. Residue Asn42 is glycosylated (N-linked (GlcNAc...) asparagine). The next 3 membrane-spanning stretches (helical) occupy residues 46–66 (TATTAIATLFACETLYLYWAL), 87–107 (VFIGLLGLLGCLVCYIIAGIT), and 124–146 (IYFSKFAAMYGENLWFTGSWSLV).

It belongs to the HRG family.

The protein resides in the cell membrane. Heme transporter that mediates heme uptake across the plasma membrane. This Caenorhabditis elegans protein is Heme transporter hrg-4.